The chain runs to 683 residues: DNA ligase (683 aa).

NAD(+) contacts are provided by residues 35 to 39 (DADYD), 84 to 85 (SL), and glutamate 115. Lysine 117 (N6-AMP-lysine intermediate) is an active-site residue. NAD(+) is bound by residues arginine 138, glutamate 175, lysine 293, and lysine 317. 4 residues coordinate Zn(2+): cysteine 411, cysteine 414, cysteine 429, and cysteine 435. The BRCT domain occupies 598–683 (QTNSAVSGKT…LQNISTGAQQ (86 aa)).

This sequence belongs to the NAD-dependent DNA ligase family. LigA subfamily. Mg(2+) is required as a cofactor. Requires Mn(2+) as cofactor.

It carries out the reaction NAD(+) + (deoxyribonucleotide)n-3'-hydroxyl + 5'-phospho-(deoxyribonucleotide)m = (deoxyribonucleotide)n+m + AMP + beta-nicotinamide D-nucleotide.. In terms of biological role, DNA ligase that catalyzes the formation of phosphodiester linkages between 5'-phosphoryl and 3'-hydroxyl groups in double-stranded DNA using NAD as a coenzyme and as the energy source for the reaction. It is essential for DNA replication and repair of damaged DNA. The polypeptide is DNA ligase (Nitrosomonas eutropha (strain DSM 101675 / C91 / Nm57)).